We begin with the raw amino-acid sequence, 644 residues long: Threonine--tRNA ligase (644 aa).

The region spanning 1–61 (MVAITLPDGN…TQDASVEIVT (61 aa)) is the TGS domain. Residues 242–533 (DHRKIGKALN…LIEHYAGWMP (292 aa)) are catalytic. Zn(2+) is bound by residues Cys-333, His-384, and His-510.

This sequence belongs to the class-II aminoacyl-tRNA synthetase family. In terms of assembly, homodimer. It depends on Zn(2+) as a cofactor.

The protein localises to the cytoplasm. The catalysed reaction is tRNA(Thr) + L-threonine + ATP = L-threonyl-tRNA(Thr) + AMP + diphosphate + H(+). In terms of biological role, catalyzes the attachment of threonine to tRNA(Thr) in a two-step reaction: L-threonine is first activated by ATP to form Thr-AMP and then transferred to the acceptor end of tRNA(Thr). Also edits incorrectly charged L-seryl-tRNA(Thr). This chain is Threonine--tRNA ligase, found in Psychrobacter sp. (strain PRwf-1).